Consider the following 94-residue polypeptide: Myosuppressin (94 aa).

Positions 1 to 24 are cleaved as a signal peptide; sequence MMSPTLMILISITTMAILSGESFG. Positions 25–80 are excised as a propeptide; it reads AMPAQCNSEFLEELPPRLRKICVAIARIWDAREMNDFVDDREYRENLPRYDSSVKR. Q81 bears the Pyrrolidone carboxylic acid mark. Position 90 is a phenylalanine amide (F90).

As to expression, expressed throughout the nervous system (at protein level).

The protein localises to the secreted. In terms of biological role, myoinhibiting neuropeptide. This Camponotus floridanus (Florida carpenter ant) protein is Myosuppressin.